The sequence spans 443 residues: MARQNRFDRTSFQTQIIDLSHDGRGVARPHGEGDKVTFVTGALPGEVVIVEPVARNRHFDEARVVEVLQASPQRVIPRCSHFGVCSGCVLQHLAEDAQVVSKQRVLLESLERIGRVSPERVLPALAAESWGYRRKGRFSVRWVEKKGRTLVGFREHDPRFVADVSVCHTVVPQVGEKIALLATLLNSLDGRRDVPQIEFIAGDAVVALTVRHLQPLSEADRLALIEFGKEHGIAIFLQSGGVESVRLLWPDEVLLAFRLKPWDVEFVFRPLDFIQINGGLNEKMIAHALDLLGAGFGERVLDLFCGLGNFTLPLARTVDEVVGVEGDIGLVERARENARRNGLGNAEFFVADLTRDQRDAPWMRQGFDKLLLDPPRSGAIEVLKQLPLKMFERIVYVSCHPGSLARDADFLVNEQGFVLRAVGAMDMFPHTAHVESIAVFDRC.

A TRAM domain is found at 4 to 66; it reads QNRFDRTSFQ…RHFDEARVVE (63 aa). Residues cysteine 79, cysteine 85, cysteine 88, and cysteine 167 each coordinate [4Fe-4S] cluster. Residues glutamine 275, phenylalanine 304, asparagine 309, glutamate 325, aspartate 352, and aspartate 373 each contribute to the S-adenosyl-L-methionine site. Cysteine 399 acts as the Nucleophile in catalysis.

Belongs to the class I-like SAM-binding methyltransferase superfamily. RNA M5U methyltransferase family. RlmD subfamily.

The catalysed reaction is uridine(1939) in 23S rRNA + S-adenosyl-L-methionine = 5-methyluridine(1939) in 23S rRNA + S-adenosyl-L-homocysteine + H(+). In terms of biological role, catalyzes the formation of 5-methyl-uridine at position 1939 (m5U1939) in 23S rRNA. The sequence is that of 23S rRNA (uracil(1939)-C(5))-methyltransferase RlmD from Xylella fastidiosa (strain 9a5c).